A 385-amino-acid chain; its full sequence is Cell division protein FtsZ (385 aa).

GTP contacts are provided by residues 37-41 (GGGSN), 125-127 (GTG), glutamate 156, lysine 160, and aspartate 204.

Belongs to the FtsZ family. In terms of assembly, homodimer. Polymerizes to form a dynamic ring structure in a strictly GTP-dependent manner. Interacts directly with several other division proteins.

The protein resides in the cytoplasm. Functionally, essential cell division protein that forms a contractile ring structure (Z ring) at the future cell division site. The regulation of the ring assembly controls the timing and the location of cell division. One of the functions of the FtsZ ring is to recruit other cell division proteins to the septum to produce a new cell wall between the dividing cells. Binds GTP and shows GTPase activity. In Helicobacter pylori (strain ATCC 700392 / 26695) (Campylobacter pylori), this protein is Cell division protein FtsZ.